A 471-amino-acid chain; its full sequence is F-box only protein 3 (471 aa).

The F-box domain occupies 10-56 (PLTLESLPTDPLLLILSFLDYRDLINCCYVSRRLSQLSSHDPLWRRH). The ApaG domain maps to 278 to 408 (VATTGDITVS…FHMACPTFRV (131 aa)). Positions 419-451 (EYEEMEEEEEEEEEEDEDDDSADMDESDEDDEE) are enriched in acidic residues. The disordered stretch occupies residues 419–455 (EYEEMEEEEEEEEEEDEDDDSADMDESDEDDEEERRR).

In terms of assembly, part of a SCF (SKP1-cullin-F-box) protein ligase complex SCF(FBXO3) consisting of FBXO3, SKP1, CUL1 and RBX1. Interacts with PML, interaction is direct and takes place either alone or within the SCF complex. As to quaternary structure, (Microbial infection) Interacts (via ApaG domain) with Rift valley fever virus NSs helical filament; this interaction forms a filamentous E3 which mediates degradation of TFIIH complex through interaction with GT2H1.

It localises to the nucleus. Its pathway is protein modification; protein ubiquitination. Substrate recognition component of the SCF (SKP1-CUL1-F-box protein)-type E3 ubiquitin ligase complex, SCF(FBXO3), which mediates the ubiquitination and subsequent proteasomal degradation of target proteins. Mediates the ubiquitination of HIPK2 and probably that of EP300, leading to rapid degradation by the proteasome. In the presence of PML, HIPK2 ubiquitination still occurs, but degradation is prevented. PML, HIPK2 and FBXO3 may act synergically to activate p53/TP53-dependent transactivation. The SCF(FBXO3) also acts as a regulator of inflammation by mediating ubiquitination and degradation of FBXL2 in response to lipopolysaccharide (LPS). The SCF(FBXO3) complex specifically recognizes FBXL2 phosphorylated at 'Thr-404' and promotes its ubiquitination. Functionally, (Microbial infection) Associates with the Rift valley fever virus NSs to form a remodeled E3 ligase that triggers efficient proteasomal degradation of targeted proteins. The filamentous E3 ligase targets the TFIIH complex leading to robust inhibition of antiviral immunity and enhances viral pathogenesis. The protein is F-box only protein 3 of Homo sapiens (Human).